A 233-amino-acid chain; its full sequence is MAETEGFGDSGSKQLFAGLSNVSISGDIPVEGEITVPMASTSQEDDLSTLDEPVKDTIMRDLKAVGNKFLHVMYPKKSTTLLRDWDLWGPLVLCVSLALMLQGGNADSKDDGGPQFAEVFVIIWFGAVVITLNSKLLGGTISFFQSLCVLGYCILPLTVAMLVCRLVLLLSHTTASFIVRLVVVTVMFAWSTFASTAFLADSQPPNRRALAVYPIFLFYFVISWMVLTFNTVS.

The Cytoplasmic segment spans residues 1 to 84; it reads MAETEGFGDS…PKKSTTLLRD (84 aa). The helical transmembrane segment at 85–105 threads the bilayer; it reads WDLWGPLVLCVSLALMLQGGN. Topologically, residues 106-111 are lumenal; sequence ADSKDD. Residues 112-132 form a helical membrane-spanning segment; it reads GGPQFAEVFVIIWFGAVVITL. Residues 133–142 lie on the Cytoplasmic side of the membrane; the sequence is NSKLLGGTIS. A helical transmembrane segment spans residues 143 to 163; it reads FFQSLCVLGYCILPLTVAMLV. Residues 164–180 lie on the Lumenal side of the membrane; it reads CRLVLLLSHTTASFIVR. The helical transmembrane segment at 181–201 threads the bilayer; the sequence is LVVVTVMFAWSTFASTAFLAD. At 202–208 the chain is on the cytoplasmic side; that stretch reads SQPPNRR. A helical transmembrane segment spans residues 209-229; sequence ALAVYPIFLFYFVISWMVLTF. The Lumenal portion of the chain corresponds to 230–233; the sequence is NTVS.

Belongs to the YIP1 family.

The protein resides in the golgi apparatus membrane. This Xenopus tropicalis (Western clawed frog) protein is Protein YIPF6 (yipf6).